Here is a 456-residue protein sequence, read N- to C-terminus: Multidrug resistance protein NorM (456 aa).

Transmembrane regions (helical) follow at residues 11 to 31 (LIKLATPVLIASVAQTGMGFV), 53 to 73 (IWLPSILFGIGLLMALVPVVA), 92 to 112 (VVLALLISIPIIGVLLQTQFI), 126 to 146 (TVGYIHAVIFAVPAFLLFQTL), 159 to 179 (AMVIGFIGLLLNIPLNWIFVY), 189 to 209 (GVGCGVATTIVYWVMFALLLA), 242 to 262 (FPVAAALFFEVTLFAVVALLV), 268 to 288 (IIVAAHQVAINFSSLVFMLPM), 314 to 334 (SRVGIMVGLALATITAIITVL), 356 to 376 (LLLFAAVYQCTDAVQVIAAGA), 385 to 405 (AIFNRTFIAYWILGLPTGYIL), and 417 to 437 (AQGFWLGFIIGLTAAALMLGV).

This sequence belongs to the multi antimicrobial extrusion (MATE) (TC 2.A.66.1) family.

It is found in the cell inner membrane. In terms of biological role, multidrug efflux pump that functions as a Na(+)/drug antiporter. Confers resistance to several drugs, such as norfloxacin, ciprofloxacin, ethidium, kanamycin and streptomycin. This is Multidrug resistance protein NorM (norM) from Vibrio parahaemolyticus serotype O3:K6 (strain RIMD 2210633).